The sequence spans 123 residues: Large ribosomal subunit protein uL29x (123 aa).

Belongs to the universal ribosomal protein uL29 family.

This chain is Large ribosomal subunit protein uL29x (RPL35C), found in Arabidopsis thaliana (Mouse-ear cress).